The following is a 191-amino-acid chain: Ribosome maturation factor RimP (191 aa).

It belongs to the RimP family.

The protein localises to the cytoplasm. Functionally, required for maturation of 30S ribosomal subunits. This is Ribosome maturation factor RimP from Caulobacter vibrioides (strain NA1000 / CB15N) (Caulobacter crescentus).